A 540-amino-acid polypeptide reads, in one-letter code: SNW/SKI-interacting protein B (540 aa).

Disordered stretches follow at residues 1 to 106 (MVLR…SLTV), 215 to 273 (GETQ…NPKG), 351 to 402 (GAAP…RDRD), and 502 to 526 (ASVAAGKRERPVEFDGPEMEEDPFH). Basic and acidic residues-rich tracts occupy residues 16–29 (PHDHTEDEWFKERY) and 83–94 (MGRRGGDGDGEQ). The segment at 189 to 353 (PEFIKYTPAR…KARAEMLGAA (165 aa)) is SNW. Positions 236-251 (AGSPPVPVLRSPPRPP) are enriched in pro residues. Residues 359–382 (ERSKAAAERDAIREERRRERRLEA) show a composition bias toward basic and acidic residues. The segment covering 383–393 (RAAAAAASKKS) has biased composition (low complexity).

This sequence belongs to the SNW family.

The protein localises to the nucleus. This is SNW/SKI-interacting protein B from Oryza sativa subsp. japonica (Rice).